Here is a 209-residue protein sequence, read N- to C-terminus: Uracil phosphoribosyltransferase (209 aa).

Residues arginine 79, arginine 104, and 131–139 each bind 5-phospho-alpha-D-ribose 1-diphosphate; that span reads DPMLATGGS. Uracil contacts are provided by residues isoleucine 194 and 199 to 201; that span reads GDA. Position 200 (aspartate 200) interacts with 5-phospho-alpha-D-ribose 1-diphosphate.

Belongs to the UPRTase family. The cofactor is Mg(2+).

The enzyme catalyses UMP + diphosphate = 5-phospho-alpha-D-ribose 1-diphosphate + uracil. It participates in pyrimidine metabolism; UMP biosynthesis via salvage pathway; UMP from uracil: step 1/1. Allosterically activated by GTP. In terms of biological role, catalyzes the conversion of uracil and 5-phospho-alpha-D-ribose 1-diphosphate (PRPP) to UMP and diphosphate. The chain is Uracil phosphoribosyltransferase from Clostridium acetobutylicum (strain ATCC 824 / DSM 792 / JCM 1419 / IAM 19013 / LMG 5710 / NBRC 13948 / NRRL B-527 / VKM B-1787 / 2291 / W).